Here is a 422-residue protein sequence, read N- to C-terminus: Proton-gated ion channel subunit pbo-6 (422 aa).

An N-terminal signal peptide occupies residues 1–20 (MQCSFLTIFIFITTVTVGVA). The Extracellular segment spans residues 21–233 (EFSEQYQGSS…IKVARKPFYY (213 aa)). Cysteine 151 and cysteine 165 form a disulfide bridge. Helical transmembrane passes span 234–254 (LISL…GLFA), 268–288 (LGVT…EKVP), and 294–314 (VPLL…ATIL). The Cytoplasmic portion of the chain corresponds to 315-378 (TSTVMRVHAK…GEVSRRMDYL (64 aa)). Residues 379-399 (LASVFIIIISTPTLYLFYMCF) form a helical membrane-spanning segment.

It belongs to the ligand-gated ion channel (TC 1.A.9) family. Acetylcholine receptor (TC 1.A.9.1) subfamily. The functional channel is a hetero-oligomer of pbo-5 and pbo-6. As to expression, expressed in the posterior body muscles.

The protein localises to the membrane. Forms a proton-gated ion channel with pbo-5 that is activated by acidification of the posterior coelomic space, leading to posterior body wall muscle contraction (pBoc) during the defecation cycle. Not necessary for stimulation of posterior body contraction (pBoc). Does not bind neurotransmitters such as acetylcholine, gamma-aminobutyric acid, glycine, serotonin, glutamate or choline. This chain is Proton-gated ion channel subunit pbo-6, found in Caenorhabditis elegans.